Reading from the N-terminus, the 296-residue chain is tRNA dimethylallyltransferase (296 aa).

Residue 2–9 (GPTASGKT) participates in ATP binding. 4–9 (TASGKT) is a substrate binding site. Interaction with substrate tRNA regions lie at residues 27-30 (DSAL), 151-155 (QRLSR), and 232-237 (RCVGYR).

This sequence belongs to the IPP transferase family. Monomer. It depends on Mg(2+) as a cofactor.

The enzyme catalyses adenosine(37) in tRNA + dimethylallyl diphosphate = N(6)-dimethylallyladenosine(37) in tRNA + diphosphate. Functionally, catalyzes the transfer of a dimethylallyl group onto the adenine at position 37 in tRNAs that read codons beginning with uridine, leading to the formation of N6-(dimethylallyl)adenosine (i(6)A). The sequence is that of tRNA dimethylallyltransferase from Shewanella woodyi (strain ATCC 51908 / MS32).